The sequence spans 320 residues: Pyrroline-5-carboxylate reductase 2 (320 aa).

Ser2 carries the N-acetylserine modification. NADP(+) contacts are provided by residues 6–11 (IGAGQL) and Ser34. NADPH is bound by residues Ala8, Gln10, Leu11, Ser34, Glu36, Asn56, Val70, Lys71, and Ala97. Residues Asn56, 69 to 72 (AVKP), and 95 to 97 (CAA) contribute to the NADP(+) site. Glu164 serves as a coordination point for L-proline. Asn230 serves as a coordination point for NADPH. 2 residues coordinate L-proline: Ala237 and Thr238. Over residues 296-305 (TVSTLTPSSP) the composition is skewed to low complexity. Residues 296–320 (TVSTLTPSSPGKLLTRSLALGGKKD) are disordered. Position 304 is a phosphoserine (Ser304).

The protein belongs to the pyrroline-5-carboxylate reductase family. In terms of assembly, homodecamer; composed of 5 homodimers. Interacts with LTO1.

The protein resides in the cytoplasm. It is found in the mitochondrion. The catalysed reaction is L-proline + NADP(+) = (S)-1-pyrroline-5-carboxylate + NADPH + 2 H(+). It carries out the reaction L-proline + NAD(+) = (S)-1-pyrroline-5-carboxylate + NADH + 2 H(+). It participates in amino-acid biosynthesis; L-proline biosynthesis; L-proline from L-glutamate 5-semialdehyde: step 1/1. Its function is as follows. Oxidoreductase that catalyzes the last step in proline biosynthesis, which corresponds to the reduction of pyrroline-5-carboxylate to L-proline using NAD(P)H. At physiologic concentrations, has higher specific activity in the presence of NADH. Involved in cellular response to oxidative stress. In some cell types, such as erythrocytes, its primary function may be the generation of NADP(+). The sequence is that of Pyrroline-5-carboxylate reductase 2 (PYCR2) from Pongo abelii (Sumatran orangutan).